Consider the following 1151-residue polypeptide: ATP-dependent RNA helicase ddx46 (1151 aa).

Basic and acidic residues-rich tracts occupy residues 1-26 and 35-51; these read MDEY…DNRN and YRDD…DRSH. Disordered regions lie at residues 1–138, 166–224, 287–358, and 424–449; these read MDEY…SRFD, MYQQ…VFQQ, QELK…PLVN, and TSQM…DKTI. The span at 52 to 73 shows a compositional bias: low complexity; sequence YNNNNNNNNNNNNNNNNNNGNG. The span at 81–90 shows a compositional bias: polar residues; that stretch reads SSQNKYQNHH. Low complexity-rich tracts occupy residues 91–124, 166–199, 207–224, and 291–339; these read QQSP…QPHI, MYQQ…FQHH, QPPV…VFQQ, and ASGS…TTSP. A compositionally biased stretch (acidic residues) spans 428–443; it reads IDDDEKLEEESEGEDD. A Q motif motif is present at residues 509-537; that stretch reads QSWAQAGLTEKVHLLLKKFQYEKPTSIQA. A Helicase ATP-binding domain is found at 540 to 718; that stretch reads IPAIMNGRDL…KKILNKPLEI (179 aa). 553–560 serves as a coordination point for ATP; the sequence is ARTGSGKT. The DEAD box signature appears at 666-669; that stretch reads DEAD. The Helicase C-terminal domain occupies 729-890; that stretch reads DIEQFVEVRP…KVPDELRKLN (162 aa). Positions 904–972 are disordered; sequence LLAPTGFTGR…EKEKQLLSEK (69 aa). Over residues 915 to 930 the composition is skewed to basic and acidic residues; that stretch reads HKFDAAEEDKKNIERK. Residues 938–948 are compositionally biased toward acidic residues; it reads IEEEEEEEDED. Over residues 949–972 the composition is skewed to basic and acidic residues; it reads KEKAEKEKLAAASAEKEKQLLSEK.

It belongs to the DEAD box helicase family. DDX46/PRP5 subfamily. In terms of assembly, component of the 17S U2 SnRNP complex, a ribonucleoprotein complex that contains small nuclear RNA (snRNA) U2 and a number of specific proteins.

It is found in the nucleus speckle. The catalysed reaction is ATP + H2O = ADP + phosphate + H(+). Component of the 17S U2 SnRNP complex of the spliceosome, a large ribonucleoprotein complex that removes introns from transcribed pre-mRNAs. This Dictyostelium discoideum (Social amoeba) protein is ATP-dependent RNA helicase ddx46 (helB1).